We begin with the raw amino-acid sequence, 99 residues long: uncharacterized protein (99 aa).

This is an uncharacterized protein from Borreliella burgdorferi (strain ATCC 35210 / DSM 4680 / CIP 102532 / B31) (Borrelia burgdorferi).